Consider the following 544-residue polypeptide: Chaperonin GroEL (544 aa).

Residues 30 to 33 (TLGP), lysine 51, 87 to 91 (DGTTT), glycine 415, 481 to 483 (DAL), and aspartate 497 each bind ATP.

It belongs to the chaperonin (HSP60) family. Forms a cylinder of 14 subunits composed of two heptameric rings stacked back-to-back. Interacts with the co-chaperonin GroES.

It localises to the cytoplasm. The catalysed reaction is ATP + H2O + a folded polypeptide = ADP + phosphate + an unfolded polypeptide.. Functionally, together with its co-chaperonin GroES, plays an essential role in assisting protein folding. The GroEL-GroES system forms a nano-cage that allows encapsulation of the non-native substrate proteins and provides a physical environment optimized to promote and accelerate protein folding. In Chlamydia felis (strain Fe/C-56) (Chlamydophila felis), this protein is Chaperonin GroEL.